The sequence spans 318 residues: NADH-ubiquinone oxidoreductase chain 1 (318 aa).

The next 8 helical transmembrane spans lie at 3 to 23, 69 to 89, 100 to 120, 135 to 155, 171 to 191, 223 to 243, 253 to 273, and 293 to 313; these read LINV…LTLL, LMFT…WIPI, LGVL…LWSG, AVAQ…SIMM, HMWL…STLA, FFLA…ILFF, ELHT…FLWV, and FLPL…TFAG.

Belongs to the complex I subunit 1 family.

It is found in the mitochondrion inner membrane. It carries out the reaction a ubiquinone + NADH + 5 H(+)(in) = a ubiquinol + NAD(+) + 4 H(+)(out). Functionally, core subunit of the mitochondrial membrane respiratory chain NADH dehydrogenase (Complex I) that is believed to belong to the minimal assembly required for catalysis. Complex I functions in the transfer of electrons from NADH to the respiratory chain. The immediate electron acceptor for the enzyme is believed to be ubiquinone. This chain is NADH-ubiquinone oxidoreductase chain 1 (MT-ND1), found in Dasypus novemcinctus (Nine-banded armadillo).